A 410-amino-acid polypeptide reads, in one-letter code: Sorting nexin-4 (410 aa).

The 125-residue stretch at 11–135 (FIIVSDPQKQ…TFLVSSDWDA (125 aa)) folds into the PX domain. Residues Arg58, Ser60, Lys84, and Arg101 each coordinate a 1,2-diacyl-sn-glycero-3-phospho-(1D-myo-inositol-3-phosphate). Residues 329–368 (NQEAARREKISKLESKVQALTTEVENAKKVADAFEKEALK) are a coiled coil.

The protein belongs to the sorting nexin family.

It is found in the cytoplasm. The protein resides in the cytosol. It localises to the preautophagosomal structure membrane. Its subcellular location is the endosome membrane. Functionally, sorting nexin, involved in the separation or division of vacuoles throughout the entire life cycle of the cells. Involved in retrieval of late-Golgi SNAREs from post-Golgi endosomes to the trans-Golgi network, for cytoplasm to vacuole transport (Cvt), and autophagy of large cargos including mitophagy, pexophagy and glycophagy. This chain is Sorting nexin-4 (SNX4), found in Eremothecium gossypii (strain ATCC 10895 / CBS 109.51 / FGSC 9923 / NRRL Y-1056) (Yeast).